A 417-amino-acid chain; its full sequence is Serine hydroxymethyltransferase (417 aa).

Residues Leu-121 and 125 to 127 (GHL) contribute to the (6S)-5,6,7,8-tetrahydrofolate site. Lys-229 is subject to N6-(pyridoxal phosphate)lysine. Residue 355 to 357 (SPF) participates in (6S)-5,6,7,8-tetrahydrofolate binding.

It belongs to the SHMT family. In terms of assembly, homodimer. The cofactor is pyridoxal 5'-phosphate.

The protein resides in the cytoplasm. The catalysed reaction is (6R)-5,10-methylene-5,6,7,8-tetrahydrofolate + glycine + H2O = (6S)-5,6,7,8-tetrahydrofolate + L-serine. It participates in one-carbon metabolism; tetrahydrofolate interconversion. It functions in the pathway amino-acid biosynthesis; glycine biosynthesis; glycine from L-serine: step 1/1. In terms of biological role, catalyzes the reversible interconversion of serine and glycine with tetrahydrofolate (THF) serving as the one-carbon carrier. This reaction serves as the major source of one-carbon groups required for the biosynthesis of purines, thymidylate, methionine, and other important biomolecules. Also exhibits THF-independent aldolase activity toward beta-hydroxyamino acids, producing glycine and aldehydes, via a retro-aldol mechanism. The protein is Serine hydroxymethyltransferase of Enterobacter sp. (strain 638).